Consider the following 384-residue polypeptide: NAD-capped RNA hydrolase NPY1 (384 aa).

Residues Cys-179, Cys-182, Cys-197, and Cys-206 each coordinate Zn(2+). One can recognise a Nudix hydrolase domain in the interval 219 to 351; sequence PRTDPTVIIA…AGGYRVPFKN (133 aa). 4 residues coordinate Mg(2+): Ala-256, Glu-272, Glu-276, and Glu-322. Substrate-binding positions include 256 to 258, Glu-272, Glu-276, and Glu-322; that span reads AGF. Positions 257 to 278 match the Nudix box motif; that stretch reads GFMEPSETIEEACIREIWEETG. A Microbody targeting signal motif is present at residues 378–380; sequence KTS.

It belongs to the Nudix hydrolase family. NudC subfamily. Homodimer. The cofactor is Mg(2+). Zn(2+) is required as a cofactor.

Its subcellular location is the peroxisome. The catalysed reaction is a 5'-end NAD(+)-phospho-ribonucleoside in mRNA + H2O = a 5'-end phospho-adenosine-phospho-ribonucleoside in mRNA + beta-nicotinamide D-ribonucleotide + 2 H(+). It carries out the reaction NAD(+) + H2O = beta-nicotinamide D-ribonucleotide + AMP + 2 H(+). The enzyme catalyses NADH + H2O = reduced beta-nicotinamide D-ribonucleotide + AMP + 2 H(+). Functionally, mRNA decapping enzyme that specifically removes the nicotinamide adenine dinucleotide (NAD) cap from a subset of mRNAs by hydrolyzing the diphosphate linkage to produce nicotinamide mononucleotide (NMN) and 5' monophosphate mRNA. The NAD-cap is present at the 5'-end of some RNAs; in contrast to the canonical N7 methylguanosine (m7G) cap, the NAD cap promotes mRNA decay. Mediates the hydrolysis of some nucleoside diphosphate derivatives. The protein is NAD-capped RNA hydrolase NPY1 of Saccharomyces cerevisiae (strain ATCC 204508 / S288c) (Baker's yeast).